We begin with the raw amino-acid sequence, 1765 residues long: MEERYYPVIFPDERNFRPFTFDSLAAIEKRITIQKEKKKSKDKAATEPQPRPQLDLKASRKLPKLYGDVPPDLIAKPLEDLDPFYKDHKTFMVLNKKRTIYRFSAKRALFILGPFNPIRSFMIRISVHSVFSMFIICTVIINCMFMANNSSVDSRPSSNIPEYVFIGIYVLEAVIKILARGFIVDEFSYLRDPWNWLDFIVIGTAIAPCFLGNKVNNLSTLRTFRVLRALKAISVISGLKVIVGALLRSVKKLVDVMVLTLFCLSIFALVGQQLFMGILSQKCIKDDCGPNAFSNKDCFVKENDSEDFIMCGNWLGRRSCPDGSTCNKTTFNPDYNYTNFDSFGWSFLAMFRVMTQDSWEKLYRQILRTSGIYFVFFFVVVIFLGSFYLLNLTLAVVTMAYEEQNRNVAAETEAKEKMFQEAQQLLREEKEALVAMGIDRTSLNSLQASSFSPKKRKFFGSKTRKSFFMRGSKTARASASDSEDDASKNPQLLEQTKRLSQNLPVELFDEHVDPLHRQRALSAVSILTITMQEQEKSQEPCFPCGKNLASKYLVWECSPPWLCIKKVLQTIMTDPFTELAITICIIVNTVFLAMEHHNMDNSLKDILKIGNWVFTGIFIAEMCLKIIALDPYHYFRHGWNIFDSIVALVSLADVLFHKLSKNLSFLASLRVLRVFKLAKSWPTLNTLIKIIGHSVGALGNLTVVLTIVVFIFSVVGMRLFGAKFNKTCSTSPESLRRWHMGDFYHSFLVVFRILCGEWIENMWECMQEMEGSPLCVIVFVLIMVVGKLVVLNLFIALLLNSFSNEEKDGNPEGETRKTKVQLALDRFSRAFYFMARALQNFCCKRCRRQNSPKPNEATESFAGESRDTATLDTRSWKEYDSEMTLYTGQAGAPLAPLAKEEDDMECCGECDASPTSQPSEEAQACDLPLKTKRLPSPDDHGVEMEVFSEEDPNLTIQSARKKSDAASMLSECSTIDLNDIFRNLQKTVSPQKQPDRCFPKGLSCIFLCCKTIKKKSPWVLWWNLRKTCYQIVKHSWFESFIIFVILLSSGALIFEDVNLPSRPQVEKLLKCTDNIFTFIFLLEMILKWVAFGFRKYFTSAWCWLDFLIVVVSGLSLTNLPNLKSFRNLRALRPLRALSQFEGMKVVVNALMSAIPAILNVLLVCLIFWLIFCILGVNFFSGKFGRCINGTDINKYFNASNVPNQSQCLVSNYTWKVPNVNFDNVGNAYLALLQVATYKGWLDIMNAAVDSRGKDEQPAFEANLYAYLYFVVFIIFGSFFTLNLFIGVIIDNFNQQQKKLGGQDIFMTEEQKKYYNAMKKLGTKKPQKPIPRPLNKCQAFVFDLVTSQVFDVIILGLIVTNMIIMMAESEGQPNEVKKIFDILNIVFVVIFTVECLIKVFALRQHYFTNGWNLFDCVVVVLSIISTLVSGLENSNVFPPTLFRIVRLARIGRILRLVRAARGIRTLLFALMMSLPSLFNIGLLLFLVMFIYAIFGMNWFSKVKRGSGIDDIFNFDTFSGSMLCLFQITTSAGWDALLNPMLESKASCNSSSQESCQQPQIAIVYFVSYIIISFLIVVNMYIAVILENFNTATEESEDPLGEDDFEIFYEIWEKFDPEATQFIQYSSLSDFADALPEPLRVAKPNRFQFLMMDLPMVMGDRLHCMDVLFAFTTRVLGNSSGLDTMKAMMEEKFMEANPFKKLYEPIVTTTKRKEEEECAAVIQRAYRRHMEKMIKLKLKGRSSSSLQVFCNGDLSSLDVPKIKVHCD.

The Cytoplasmic portion of the chain corresponds to 1-126; it reads MEERYYPVIF…PIRSFMIRIS (126 aa). An I repeat occupies 115–406; it reads FNPIRSFMIR…VTMAYEEQNR (292 aa). Residues 127-148 traverse the membrane as a helical segment; sequence VHSVFSMFIICTVIINCMFMAN. The N-linked (GlcNAc...) asparagine glycan is linked to asparagine 149. The Extracellular portion of the chain corresponds to 149–159; sequence NSSVDSRPSSN. The helical transmembrane segment at 160–179 threads the bilayer; that stretch reads IPEYVFIGIYVLEAVIKILA. The Cytoplasmic segment spans residues 180-191; sequence RGFIVDEFSYLR. Residues 192 to 211 traverse the membrane as a helical segment; it reads DPWNWLDFIVIGTAIAPCFL. The Extracellular portion of the chain corresponds to 212–219; it reads GNKVNNLS. The N-linked (GlcNAc...) asparagine glycan is linked to asparagine 217. Residues 220–239 traverse the membrane as a helical; Voltage-sensor segment; it reads TLRTFRVLRALKAISVISGL. Over 240–255 the chain is Cytoplasmic; sequence KVIVGALLRSVKKLVD. A helical transmembrane segment spans residues 256–269; sequence VMVLTLFCLSIFAL. Topologically, residues 270–342 are extracellular; the sequence is VGQQLFMGIL…PDYNYTNFDS (73 aa). Residues cysteine 283 and cysteine 320 are joined by a disulfide bond. N-linked (GlcNAc...) asparagine glycans are attached at residues asparagine 303, asparagine 327, and asparagine 336. The pore-forming intramembrane region spans 343 to 367; the sequence is FGWSFLAMFRVMTQDSWEKLYRQIL. The Extracellular segment spans residues 368–374; it reads RTSGIYF. The helical transmembrane segment at 375–400 threads the bilayer; that stretch reads VFFFVVVIFLGSFYLLNLTLAVVTMA. The Cytoplasmic segment spans residues 401-570; the sequence is YEEQNRNVAA…WLCIKKVLQT (170 aa). Residues 470–490 form a disordered region; it reads RGSKTARASASDSEDDASKNP. The stretch at 557–821 is one II repeat; sequence CSPPWLCIKK…EGETRKTKVQ (265 aa). The chain crosses the membrane as a helical span at residues 571 to 594; it reads IMTDPFTELAITICIIVNTVFLAM. Residues 595 to 605 are Extracellular-facing; sequence EHHNMDNSLKD. A helical transmembrane segment spans residues 606–629; the sequence is ILKIGNWVFTGIFIAEMCLKIIAL. At 630 to 637 the chain is on the cytoplasmic side; it reads DPYHYFRH. The chain crosses the membrane as a helical span at residues 638-659; it reads GWNIFDSIVALVSLADVLFHKL. At 660–664 the chain is on the extracellular side; it reads SKNLS. An N-linked (GlcNAc...) asparagine glycan is attached at asparagine 662. The helical; Voltage-sensor transmembrane segment at 665–684 threads the bilayer; that stretch reads FLASLRVLRVFKLAKSWPTL. Over 685 to 699 the chain is Cytoplasmic; that stretch reads NTLIKIIGHSVGALG. Residues 700-722 form a helical membrane-spanning segment; it reads NLTVVLTIVVFIFSVVGMRLFGA. Over 723–742 the chain is Extracellular; sequence KFNKTCSTSPESLRRWHMGD. N-linked (GlcNAc...) asparagine glycosylation is present at asparagine 725. An intramembrane region (pore-forming) is located at residues 743–763; it reads FYHSFLVVFRILCGEWIENMW. At 764–773 the chain is on the extracellular side; it reads ECMQEMEGSP. A disulfide bridge connects residues cysteine 765 and cysteine 775. A helical membrane pass occupies residues 774 to 799; that stretch reads LCVIVFVLIMVVGKLVVLNLFIALLL. The Cytoplasmic portion of the chain corresponds to 800-1030; the sequence is NSFSNEEKDG…WWNLRKTCYQ (231 aa). A disordered region spans residues 850–869; that stretch reads NSPKPNEATESFAGESRDTA. Residues 1023-1320 form an III repeat; the sequence is NLRKTCYQIV…KKYYNAMKKL (298 aa). The chain crosses the membrane as a helical span at residues 1031–1053; it reads IVKHSWFESFIIFVILLSSGALI. Over 1054-1067 the chain is Extracellular; it reads FEDVNLPSRPQVEK. A helical membrane pass occupies residues 1068 to 1093; the sequence is LLKCTDNIFTFIFLLEMILKWVAFGF. Residues 1094-1099 lie on the Cytoplasmic side of the membrane; it reads RKYFTS. A helical transmembrane segment spans residues 1100–1117; sequence AWCWLDFLIVVVSGLSLT. Asparagine 1118 is a topological domain (extracellular). A helical; Voltage-sensor transmembrane segment spans residues 1119–1140; sequence LPNLKSFRNLRALRPLRALSQF. The Cytoplasmic portion of the chain corresponds to 1141-1159; that stretch reads EGMKVVVNALMSAIPAILN. The chain crosses the membrane as a helical span at residues 1160 to 1181; that stretch reads VLLVCLIFWLIFCILGVNFFSG. Residues 1182-1224 are Extracellular-facing; it reads KFGRCINGTDINKYFNASNVPNQSQCLVSNYTWKVPNVNFDNV. 4 N-linked (GlcNAc...) asparagine glycosylation sites follow: asparagine 1188, asparagine 1197, asparagine 1203, and asparagine 1211. The pore-forming intramembrane region spans 1225–1246; it reads GNAYLALLQVATYKGWLDIMNA. Topologically, residues 1247-1262 are extracellular; it reads AVDSRGKDEQPAFEAN. A helical membrane pass occupies residues 1263–1289; it reads LYAYLYFVVFIIFGSFFTLNLFIGVII. Topologically, residues 1290-1342 are cytoplasmic; it reads DNFNQQQKKLGGQDIFMTEEQKKYYNAMKKLGTKKPQKPIPRPLNKCQAFVFD. One copy of the IV repeat lies at 1329–1619; the sequence is IPRPLNKCQA…WEKFDPEATQ (291 aa). The helical transmembrane segment at 1343–1366 threads the bilayer; it reads LVTSQVFDVIILGLIVTNMIIMMA. At 1367–1377 the chain is on the extracellular side; the sequence is ESEGQPNEVKK. The helical transmembrane segment at 1378–1401 threads the bilayer; it reads IFDILNIVFVVIFTVECLIKVFAL. The Cytoplasmic segment spans residues 1402–1407; it reads RQHYFT. A helical transmembrane segment spans residues 1408–1431; that stretch reads NGWNLFDCVVVVLSIISTLVSGLE. The Extracellular segment spans residues 1432–1440; that stretch reads NSNVFPPTL. Residues 1441-1463 traverse the membrane as a helical; Voltage-sensor segment; that stretch reads FRIVRLARIGRILRLVRAARGIR. Over 1464-1478 the chain is Cytoplasmic; sequence TLLFALMMSLPSLFN. A helical transmembrane segment spans residues 1479-1501; it reads IGLLLFLVMFIYAIFGMNWFSKV. The Extracellular segment spans residues 1502-1515; the sequence is KRGSGIDDIFNFDT. Positions 1516 to 1538 form an intramembrane region, pore-forming; it reads FSGSMLCLFQITTSAGWDALLNP. Residues 1539-1559 are Extracellular-facing; sequence MLESKASCNSSSQESCQQPQI. Residues 1560–1584 form a helical membrane-spanning segment; that stretch reads AIVYFVSYIIISFLIVVNMYIAVIL. At 1585-1765 the chain is on the cytoplasmic side; it reads ENFNTATEES…DVPKIKVHCD (181 aa).

It belongs to the sodium channel (TC 1.A.1.10) family. Nav1.9/SCN11A subfamily. As to quaternary structure, the voltage-resistant sodium channel consists of an ion conducting pore forming alpha-subunit regulated by one or more auxiliary subunits SCN1B, SCN2B and SCN3B. Expressed in the dorsal root ganglia (C-fiber neurons), spinal cord, trigeminal ganglia, testis, ovary, uterus and small intestine.

Its subcellular location is the cell membrane. It catalyses the reaction Na(+)(in) = Na(+)(out). In terms of biological role, sodium channel mediating the voltage-dependent sodium ion permeability of excitable membranes. Assuming opened or closed conformations in response to the voltage difference across the membrane, the protein forms a sodium-selective channel through which sodium ions may pass in accordance with their electrochemical gradient. Involved in membrane depolarization during action potential in nociceptors which function as key relay stations for the electrical transmission of pain signals from the periphery to the central nervous system. Also involved in rapid BDNF-evoked neuronal depolarization. This Mus musculus (Mouse) protein is Sodium channel protein type 11 subunit alpha.